A 429-amino-acid polypeptide reads, in one-letter code: Glutamyl-tRNA reductase (429 aa).

Substrate contacts are provided by residues 56–59, serine 119, 124–126, and glutamine 130; these read TCNR and EPQ. Cysteine 57 acts as the Nucleophile in catalysis. Residue 199 to 204 participates in NADP(+) binding; sequence GAGEMI.

This sequence belongs to the glutamyl-tRNA reductase family. Homodimer.

The catalysed reaction is (S)-4-amino-5-oxopentanoate + tRNA(Glu) + NADP(+) = L-glutamyl-tRNA(Glu) + NADPH + H(+). It functions in the pathway porphyrin-containing compound metabolism; protoporphyrin-IX biosynthesis; 5-aminolevulinate from L-glutamyl-tRNA(Glu): step 1/2. Catalyzes the NADPH-dependent reduction of glutamyl-tRNA(Glu) to glutamate 1-semialdehyde (GSA). In Janthinobacterium sp. (strain Marseille) (Minibacterium massiliensis), this protein is Glutamyl-tRNA reductase.